The following is a 427-amino-acid chain: Lupus La protein homolog B (427 aa).

The region spanning 6–98 (DKEQLDLDTK…RRSPAKPLPE (93 aa)) is the HTH La-type RNA-binding domain. Residues 110-202 (RSVYIKGFPT…EERKLNKSEE (93 aa)) form the RRM domain. Disordered stretches follow at residues 193–220 (EERK…AEDA) and 319–427 (EGKQ…VGDQ). The xRRM domain maps to 226-348 (EERVGCLLKF…KGRGGKGNDS (123 aa)). The Nuclear localization signal signature appears at 315–331 (KKIMEGKQESFNKRKGR). Composition is skewed to basic residues over residues 327-342 (KRKG…KGRG) and 351-360 (RKKIQFQGKK). Residues 365-376 (SSDDEDDMEESE) show a composition bias toward acidic residues. The segment covering 405-427 (RALDDKAEDGPAVKQSKTEVGDQ) has biased composition (basic and acidic residues).

Phosphorylated.

It localises to the nucleus. In terms of biological role, la protein plays a role in the transcription of RNA polymerase III. It is most probably a transcription termination factor. Binds to the 3' termini of virtually all nascent polymerase III transcripts. The chain is Lupus La protein homolog B (ssb-b) from Xenopus laevis (African clawed frog).